Here is a 163-residue protein sequence, read N- to C-terminus: NADH-quinone oxidoreductase subunit I (163 aa).

2 consecutive 4Fe-4S ferredoxin-type domains span residues 53 to 83 and 94 to 123; these read LRRYPNGEERCIACKLCEAICPAQAITIEAG and VRYDIDMVKCIYCGFCQEACPVDAIVEGPN. Residues cysteine 63, cysteine 66, cysteine 69, cysteine 73, cysteine 103, cysteine 106, cysteine 109, and cysteine 113 each coordinate [4Fe-4S] cluster.

The protein belongs to the complex I 23 kDa subunit family. NDH-1 is composed of 14 different subunits. Subunits NuoA, H, J, K, L, M, N constitute the membrane sector of the complex. [4Fe-4S] cluster is required as a cofactor.

Its subcellular location is the cell inner membrane. It carries out the reaction a quinone + NADH + 5 H(+)(in) = a quinol + NAD(+) + 4 H(+)(out). Its function is as follows. NDH-1 shuttles electrons from NADH, via FMN and iron-sulfur (Fe-S) centers, to quinones in the respiratory chain. The immediate electron acceptor for the enzyme in this species is believed to be ubiquinone. Couples the redox reaction to proton translocation (for every two electrons transferred, four hydrogen ions are translocated across the cytoplasmic membrane), and thus conserves the redox energy in a proton gradient. The chain is NADH-quinone oxidoreductase subunit I from Brucella melitensis biotype 1 (strain ATCC 23456 / CCUG 17765 / NCTC 10094 / 16M).